The sequence spans 128 residues: T-cell leukemia/lymphoma protein 1B (128 aa).

This sequence belongs to the TCL1 family. Interacts with AKT1 and AKT2 (via PH domain). Does not interact with AKT3. In terms of tissue distribution, expressed in a variety of tissues including placenta and testis.

Enhances the phosphorylation and activation of AKT1 and AKT2. The protein is T-cell leukemia/lymphoma protein 1B (TCL1B) of Homo sapiens (Human).